The following is a 265-amino-acid chain: Flagellar brake protein YcgR (265 aa).

A PilZ domain is found at 135 to 252 (QRRESYRLET…DETIQRYIFR (118 aa)).

It belongs to the YcgR family. In terms of assembly, monomer. Interacts with the flagellar basal bodies.

The protein localises to the bacterial flagellum basal body. In terms of biological role, acts as a flagellar brake, regulating swimming and swarming in a bis-(3'-5') cyclic diguanylic acid (c-di-GMP)-dependent manner. Binds 1 c-di-GMP dimer per subunit. Increasing levels of c-di-GMP lead to decreased motility. This Xanthomonas campestris pv. campestris (strain B100) protein is Flagellar brake protein YcgR.